Consider the following 302-residue polypeptide: Lipoyl synthase (302 aa).

[4Fe-4S] cluster contacts are provided by C44, C49, C55, C70, C74, C77, and S283. A Radical SAM core domain is found at 56–272; it reads WSKKHATVMI…AKVARSKGFL (217 aa).

This sequence belongs to the radical SAM superfamily. Lipoyl synthase family. It depends on [4Fe-4S] cluster as a cofactor.

It localises to the cytoplasm. The catalysed reaction is [[Fe-S] cluster scaffold protein carrying a second [4Fe-4S](2+) cluster] + N(6)-octanoyl-L-lysyl-[protein] + 2 oxidized [2Fe-2S]-[ferredoxin] + 2 S-adenosyl-L-methionine + 4 H(+) = [[Fe-S] cluster scaffold protein] + N(6)-[(R)-dihydrolipoyl]-L-lysyl-[protein] + 4 Fe(3+) + 2 hydrogen sulfide + 2 5'-deoxyadenosine + 2 L-methionine + 2 reduced [2Fe-2S]-[ferredoxin]. It functions in the pathway protein modification; protein lipoylation via endogenous pathway; protein N(6)-(lipoyl)lysine from octanoyl-[acyl-carrier-protein]: step 2/2. Functionally, catalyzes the radical-mediated insertion of two sulfur atoms into the C-6 and C-8 positions of the octanoyl moiety bound to the lipoyl domains of lipoate-dependent enzymes, thereby converting the octanoylated domains into lipoylated derivatives. The chain is Lipoyl synthase from Orientia tsutsugamushi (strain Boryong) (Rickettsia tsutsugamushi).